The primary structure comprises 384 residues: Alanine racemase (384 aa).

The active-site Proton acceptor; specific for D-alanine is lysine 46. N6-(pyridoxal phosphate)lysine is present on lysine 46. Residue arginine 144 participates in substrate binding. Tyrosine 278 (proton acceptor; specific for L-alanine) is an active-site residue. Methionine 326 contributes to the substrate binding site.

The protein belongs to the alanine racemase family. Pyridoxal 5'-phosphate serves as cofactor.

It catalyses the reaction L-alanine = D-alanine. Its pathway is amino-acid biosynthesis; D-alanine biosynthesis; D-alanine from L-alanine: step 1/1. Its function is as follows. Catalyzes the interconversion of L-alanine and D-alanine. May also act on other amino acids. The sequence is that of Alanine racemase (alr) from Frankia casuarinae (strain DSM 45818 / CECT 9043 / HFP020203 / CcI3).